The sequence spans 240 residues: Ribonuclease PH (240 aa).

Residues Arg87 and 125–127 contribute to the phosphate site; that span reads GTR.

Belongs to the RNase PH family. In terms of assembly, homohexameric ring arranged as a trimer of dimers.

It catalyses the reaction tRNA(n+1) + phosphate = tRNA(n) + a ribonucleoside 5'-diphosphate. Phosphorolytic 3'-5' exoribonuclease that plays an important role in tRNA 3'-end maturation. Removes nucleotide residues following the 3'-CCA terminus of tRNAs; can also add nucleotides to the ends of RNA molecules by using nucleoside diphosphates as substrates, but this may not be physiologically important. Probably plays a role in initiation of 16S rRNA degradation (leading to ribosome degradation) during starvation. The protein is Ribonuclease PH of Crocosphaera subtropica (strain ATCC 51142 / BH68) (Cyanothece sp. (strain ATCC 51142)).